The primary structure comprises 322 residues: Transaldolase (322 aa).

The active-site Schiff-base intermediate with substrate is Lys136.

It belongs to the transaldolase family. Type 1 subfamily. In terms of assembly, homodimer.

It localises to the cytoplasm. The catalysed reaction is D-sedoheptulose 7-phosphate + D-glyceraldehyde 3-phosphate = D-erythrose 4-phosphate + beta-D-fructose 6-phosphate. It participates in carbohydrate degradation; pentose phosphate pathway; D-glyceraldehyde 3-phosphate and beta-D-fructose 6-phosphate from D-ribose 5-phosphate and D-xylulose 5-phosphate (non-oxidative stage): step 2/3. Transaldolase is important for the balance of metabolites in the pentose-phosphate pathway. The sequence is that of Transaldolase from Xanthomonas campestris pv. campestris (strain B100).